The primary structure comprises 136 residues: NADPH-dependent 7-cyano-7-deazaguanine reductase (136 aa).

C50 serves as the catalytic Thioimide intermediate. D57 serves as the catalytic Proton donor. Substrate contacts are provided by residues 72-74 (YEL) and 91-92 (HE).

It belongs to the GTP cyclohydrolase I family. QueF type 1 subfamily.

Its subcellular location is the cytoplasm. It carries out the reaction 7-aminomethyl-7-carbaguanine + 2 NADP(+) = 7-cyano-7-deazaguanine + 2 NADPH + 3 H(+). Its pathway is tRNA modification; tRNA-queuosine biosynthesis. Its function is as follows. Catalyzes the NADPH-dependent reduction of 7-cyano-7-deazaguanine (preQ0) to 7-aminomethyl-7-deazaguanine (preQ1). The polypeptide is NADPH-dependent 7-cyano-7-deazaguanine reductase (Prochlorococcus marinus (strain MIT 9312)).